A 684-amino-acid polypeptide reads, in one-letter code: MPDAFCRDWTSEMGANYSMSKKRHEELKKIISEHDHNYHVLDKPTITDYEYDQLFAELLDIEKNPKGLDLSDSPSQRVGGTVLEGFTKAQHRLPMLSLANSYSPEDIFEFDERVRKFLNTEDPVEYLCELKFDGLSMELIYENGQLVRAITRGDGTVGEDVTHNIKTIKSIPLKLSHKNPPPLLEVRGEVLMFKEDFARLNETQQENGQQTFANPRNAAAGTVRQLDSRIAASRPLRFFGYALGAVEGETFNTQKNIQEYFNDHGIPTVLPYKEDLLVVAKGPEEVVKYYHHIEKVRPKLPFDIDGVVIKVNSLRLQEDLGLVARSPRWATAAKFKPEQAQTTVEDIVVQVGRTGALTPVAIMKPVKVGGVTVTNATLHNQDEITRKDIRIGDTVIIQRAGDVIPEVVEVVNPDKRPADRLPYSIPERCPACDSVAVKAEGEVVTRCVNPLCIAVVKESLKHFVARRAMNIDKVGDRLIETLVDNKLLTRFSDFYRLTKEQILSLERQGDKSADNIIKSIENSKNPTLARFIFALGIRFVGEQTGKHLADHFLTIDKFLEASEEELLQVPEIGAKVAKSIRDWTGNPKLVDEVKAMIELGVKIAGPVRAQEGSLSGMSFLITGTLPVKRDDAKDLIERNGGKILGSVSSKLNYLVVGDDPGSKVEKAQGLGVKIISWEELQAMI.

Residues 48 to 52 (DYEYD), 97 to 98 (SL), and Glu-129 contribute to the NAD(+) site. Residue Lys-131 is the N6-AMP-lysine intermediate of the active site. Residues Arg-152, Glu-189, Lys-310, and Lys-334 each contribute to the NAD(+) site. Positions 429, 432, 447, and 452 each coordinate Zn(2+). The region spanning 609-684 (AQEGSLSGMS…ISWEELQAMI (76 aa)) is the BRCT domain.

It belongs to the NAD-dependent DNA ligase family. LigA subfamily. It depends on Mg(2+) as a cofactor. Requires Mn(2+) as cofactor.

The catalysed reaction is NAD(+) + (deoxyribonucleotide)n-3'-hydroxyl + 5'-phospho-(deoxyribonucleotide)m = (deoxyribonucleotide)n+m + AMP + beta-nicotinamide D-nucleotide.. Functionally, DNA ligase that catalyzes the formation of phosphodiester linkages between 5'-phosphoryl and 3'-hydroxyl groups in double-stranded DNA using NAD as a coenzyme and as the energy source for the reaction. It is essential for DNA replication and repair of damaged DNA. This chain is DNA ligase, found in Bdellovibrio bacteriovorus (strain ATCC 15356 / DSM 50701 / NCIMB 9529 / HD100).